The following is a 799-amino-acid chain: Lon protease 4 (799 aa).

A Lon N-terminal domain is found at 15 to 204; it reads FPLLPLRTGV…RVAGLLAEAS (190 aa). 356–363 lines the ATP pocket; the sequence is GPPGVGKT. In terms of domain architecture, Lon proteolytic spans 595-776; the sequence is TSVAGVATGL…SQVIAAALEE (182 aa). Residues Ser682 and Lys725 contribute to the active site.

The protein belongs to the peptidase S16 family. Homohexamer. Organized in a ring with a central cavity.

The protein resides in the cytoplasm. It catalyses the reaction Hydrolysis of proteins in presence of ATP.. In terms of biological role, ATP-dependent serine protease that mediates the selective degradation of mutant and abnormal proteins as well as certain short-lived regulatory proteins. Required for cellular homeostasis and for survival from DNA damage and developmental changes induced by stress. Degrades polypeptides processively to yield small peptide fragments that are 5 to 10 amino acids long. Binds to DNA in a double-stranded, site-specific manner. This chain is Lon protease 4, found in Sorangium cellulosum (strain So ce56) (Polyangium cellulosum (strain So ce56)).